The following is an 85-amino-acid chain: MAQKKGGGSTRNGRDSKPKMLGVKAYGGELISAGSIIVRQRGTRIHPGVNVGVGKDHTLFALVDGHVSFGTKGALSKHTVSVTPA.

Gly residues predominate over residues 1-10; sequence MAQKKGGGST. A disordered region spans residues 1-20; the sequence is MAQKKGGGSTRNGRDSKPKM.

The protein belongs to the bacterial ribosomal protein bL27 family.

This chain is Large ribosomal subunit protein bL27, found in Acidovorax ebreus (strain TPSY) (Diaphorobacter sp. (strain TPSY)).